Here is a 281-residue protein sequence, read N- to C-terminus: ATP synthase gamma chain (281 aa).

The protein belongs to the ATPase gamma chain family. F-type ATPases have 2 components, CF(1) - the catalytic core - and CF(0) - the membrane proton channel. CF(1) has five subunits: alpha(3), beta(3), gamma(1), delta(1), epsilon(1). CF(0) has three main subunits: a, b and c.

The protein resides in the cell inner membrane. In terms of biological role, produces ATP from ADP in the presence of a proton gradient across the membrane. The gamma chain is believed to be important in regulating ATPase activity and the flow of protons through the CF(0) complex. This chain is ATP synthase gamma chain, found in Ehrlichia canis (strain Jake).